The following is a 340-amino-acid chain: Phospho-N-acetylmuramoyl-pentapeptide-transferase (340 aa).

A run of 10 helical transmembrane segments spans residues 3–23, 53–73, 79–99, 119–139, 144–164, 176–196, 200–220, 227–247, 250–270, and 315–335; these read MSLIAGVAAFVLTVLAMPHFI, GGTVFLVVAILISLIFNFHVF, AYGATAGILFVILIYGIIGFL, MALQIVAGLLFYFIHVLPSGT, IGGLTIQLGVFYVLFVLFWIV, IDGLASVSVVISLIAYGIIAF, ELAILTIIITMIGALLGFFVF, VFMGDVGSLSLGAMLAVISIA, VEWTLLLIGVVYVLETASVML, and VDAFLWTIGALASSITLWMVL.

The protein belongs to the glycosyltransferase 4 family. MraY subfamily. Mg(2+) serves as cofactor.

The protein localises to the cell membrane. It catalyses the reaction UDP-N-acetyl-alpha-D-muramoyl-L-alanyl-gamma-D-glutamyl-L-lysyl-D-alanyl-D-alanine + di-trans,octa-cis-undecaprenyl phosphate = Mur2Ac(oyl-L-Ala-gamma-D-Glu-L-Lys-D-Ala-D-Ala)-di-trans,octa-cis-undecaprenyl diphosphate + UMP. Its pathway is cell wall biogenesis; peptidoglycan biosynthesis. Catalyzes the initial step of the lipid cycle reactions in the biosynthesis of the cell wall peptidoglycan: transfers peptidoglycan precursor phospho-MurNAc-pentapeptide from UDP-MurNAc-pentapeptide onto the lipid carrier undecaprenyl phosphate, yielding undecaprenyl-pyrophosphoryl-MurNAc-pentapeptide, known as lipid I. The polypeptide is Phospho-N-acetylmuramoyl-pentapeptide-transferase (Streptococcus thermophilus (strain CNRZ 1066)).